Reading from the N-terminus, the 275-residue chain is Undecaprenyl-diphosphatase 2 (275 aa).

The next 7 helical transmembrane spans lie at Asn-48–Phe-68, Gly-90–Phe-110, Ile-117–Ala-137, Ile-154–Phe-174, Ala-195–Ile-215, Ile-223–Val-243, and Ile-254–Phe-274.

The protein belongs to the UppP family.

It localises to the cell membrane. The enzyme catalyses di-trans,octa-cis-undecaprenyl diphosphate + H2O = di-trans,octa-cis-undecaprenyl phosphate + phosphate + H(+). Its function is as follows. Catalyzes the dephosphorylation of undecaprenyl diphosphate (UPP). Confers resistance to bacitracin. The polypeptide is Undecaprenyl-diphosphatase 2 (Shouchella clausii (strain KSM-K16) (Alkalihalobacillus clausii)).